Consider the following 174-residue polypeptide: NADH-quinone oxidoreductase subunit B (174 aa).

[4Fe-4S] cluster-binding residues include Cys51, Cys52, Cys116, and Cys146.

It belongs to the complex I 20 kDa subunit family. As to quaternary structure, NDH-1 is composed of 14 different subunits. Subunits NuoB, C, D, E, F, and G constitute the peripheral sector of the complex. [4Fe-4S] cluster is required as a cofactor.

The protein localises to the cell inner membrane. It carries out the reaction a quinone + NADH + 5 H(+)(in) = a quinol + NAD(+) + 4 H(+)(out). NDH-1 shuttles electrons from NADH, via FMN and iron-sulfur (Fe-S) centers, to quinones in the respiratory chain. The immediate electron acceptor for the enzyme in this species is believed to be ubiquinone. Couples the redox reaction to proton translocation (for every two electrons transferred, four hydrogen ions are translocated across the cytoplasmic membrane), and thus conserves the redox energy in a proton gradient. In Anaplasma phagocytophilum (strain HZ), this protein is NADH-quinone oxidoreductase subunit B.